Reading from the N-terminus, the 576-residue chain is Formate--tetrahydrofolate ligase 2 (576 aa).

ATP is bound at residue 69-76; it reads TPLGEGKT.

The protein belongs to the formate--tetrahydrofolate ligase family.

It carries out the reaction (6S)-5,6,7,8-tetrahydrofolate + formate + ATP = (6R)-10-formyltetrahydrofolate + ADP + phosphate. It functions in the pathway one-carbon metabolism; tetrahydrofolate interconversion. In Rubrobacter xylanophilus (strain DSM 9941 / JCM 11954 / NBRC 16129 / PRD-1), this protein is Formate--tetrahydrofolate ligase 2.